A 473-amino-acid polypeptide reads, in one-letter code: Ribulose bisphosphate carboxylase large chain 1 (473 aa).

Substrate contacts are provided by Asn-116 and Thr-166. Residue Lys-168 is the Proton acceptor of the active site. Lys-170 lines the substrate pocket. Lys-194, Asp-196, and Glu-197 together coordinate Mg(2+). N6-carboxylysine is present on Lys-194. Residue His-287 is the Proton acceptor of the active site. Substrate is bound by residues Arg-288, His-320, and Ser-372.

The protein belongs to the RuBisCO large chain family. Type I subfamily. In terms of assembly, heterohexadecamer of 8 large chains and 8 small chains. It depends on Mg(2+) as a cofactor.

It catalyses the reaction 2 (2R)-3-phosphoglycerate + 2 H(+) = D-ribulose 1,5-bisphosphate + CO2 + H2O. The enzyme catalyses D-ribulose 1,5-bisphosphate + O2 = 2-phosphoglycolate + (2R)-3-phosphoglycerate + 2 H(+). Its function is as follows. RuBisCO catalyzes two reactions: the carboxylation of D-ribulose 1,5-bisphosphate, the primary event in carbon dioxide fixation, as well as the oxidative fragmentation of the pentose substrate. Both reactions occur simultaneously and in competition at the same active site. The polypeptide is Ribulose bisphosphate carboxylase large chain 1 (Acidithiobacillus ferrooxidans (strain ATCC 23270 / DSM 14882 / CIP 104768 / NCIMB 8455) (Ferrobacillus ferrooxidans (strain ATCC 23270))).